The sequence spans 433 residues: Succinate--CoA ligase [GDP-forming] subunit beta, mitochondrial (433 aa).

A mitochondrion-targeting transit peptide spans 1-38 (MASPVAIAAQAGKLLRERALRPLLAVRSQAGHLTPRRW). An ATP-grasp domain is found at 47–275 (KKLMSEHGVR…NAEFRQKDIF (229 aa)). GTP is bound at residue glutamine 58. N6-acetyllysine; alternate is present on lysine 67. Residue lysine 67 is modified to N6-succinyllysine; alternate. The residue at position 74 (lysine 74) is an N6-acetyllysine. Lysine 79 carries the N6-succinyllysine modification. Position 91 to 93 (91 to 93 (GRG)) interacts with GTP. 3 positions are modified to N6-acetyllysine: lysine 112, lysine 133, and lysine 140. Leucine 147 is a binding site for GTP. A Phosphoserine modification is found at serine 162. Lysine 201 carries the N6-acetyllysine modification. The residue at position 217 (serine 217) is a Phosphoserine. An N6-acetyllysine mark is found at lysine 219 and lysine 228. Positions 244 and 258 each coordinate Mg(2+). An N6-acetyllysine modification is found at lysine 272. Asparagine 309 contributes to the substrate binding site. Lysine 339 bears the N6-succinyllysine mark. N6-acetyllysine is present on lysine 348. Substrate is bound at residue 366-368 (GIV). Lysine 387, lysine 407, and lysine 424 each carry N6-acetyllysine.

Belongs to the succinate/malate CoA ligase beta subunit family. GTP-specific subunit beta subfamily. In terms of assembly, heterodimer of an alpha and a beta subunit. The beta subunit determines specificity for GTP. Mg(2+) is required as a cofactor.

Its subcellular location is the mitochondrion. It carries out the reaction GTP + succinate + CoA = succinyl-CoA + GDP + phosphate. It participates in carbohydrate metabolism; tricarboxylic acid cycle; succinate from succinyl-CoA (ligase route): step 1/1. In terms of biological role, GTP-specific succinyl-CoA synthetase functions in the citric acid cycle (TCA), coupling the hydrolysis of succinyl-CoA to the synthesis of GTP and thus represents the only step of substrate-level phosphorylation in the TCA. The beta subunit provides nucleotide specificity of the enzyme and binds the substrate succinate, while the binding sites for coenzyme A and phosphate are found in the alpha subunit. The chain is Succinate--CoA ligase [GDP-forming] subunit beta, mitochondrial from Mus musculus (Mouse).